Here is a 399-residue protein sequence, read N- to C-terminus: N-acetylglucosamine-6-phosphate deacetylase (399 aa).

Positions 65, 67, and 135 each coordinate a divalent metal cation. A substrate-binding site is contributed by 146-147 (AH). 2 residues coordinate a divalent metal cation: His-201 and His-222. Residues 225–226 (NG), Arg-233, and 254–257 (DGHH) each bind substrate. Asp-279 contributes to the a divalent metal cation binding site. Catalysis depends on Asp-279, which acts as the Proton donor/acceptor. Substrate is bound at residue 312–314 (LAG).

Belongs to the metallo-dependent hydrolases superfamily. NagA family. Homodimer. The cofactor is a divalent metal cation.

The enzyme catalyses N-acetyl-D-glucosamine 6-phosphate + H2O = D-glucosamine 6-phosphate + acetate. Its pathway is amino-sugar metabolism; N-acetylneuraminate degradation; D-fructose 6-phosphate from N-acetylneuraminate: step 4/5. Involved in the first committed step in the biosynthesis of amino-sugar-nucleotides. Catalyzes the hydrolysis of the N-acetyl group of N-acetylglucosamine-6-phosphate (GlcNAc-6-P) to yield glucosamine 6-phosphate and acetate. The sequence is that of N-acetylglucosamine-6-phosphate deacetylase (manD) from Vibrio furnissii.